The chain runs to 1287 residues: Pullulanase A (1287 aa).

The first 44 residues, 1-44 (MRKTPSHTEKKMVYSIRSLKNGTGSVLIGASLVLLAMATPTISS), serve as a signal peptide directing secretion. Positions 42–139 (ISSDESTPTT…VTTETKAEEP (98 aa)) are disordered. Low complexity predominate over residues 48 to 61 (TPTTNEPNNRNTTT). The segment covering 79–90 (DISSPGNANASL) has biased composition (polar residues). Composition is skewed to low complexity over residues 99-113 (TEPT…DPAP) and 122-133 (EPTTSTSPVTTE). Substrate contacts are provided by residues 163-165 (WTW), tryptophan 175, aspartate 221, 270-272 (WYW), tryptophan 283, lysine 325, and asparagine 330. 2 residues coordinate Ca(2+): serine 668 and tyrosine 670. Substrate contacts are provided by residues 674–675 (YD) and phenylalanine 750. Aspartate 785 (nucleophile) is an active-site residue. Catalysis depends on glutamate 814, which acts as the Proton donor. Residue tryptophan 816 participates in substrate binding. Ca(2+)-binding residues include methionine 835, threonine 838, and aspartate 839. 3 residues coordinate substrate: aspartate 846, arginine 849, and tyrosine 856. The Ca(2+) site is built by aspartate 889 and aspartate 893. Substrate is bound by residues asparagine 903, lysine 976, and 996–998 (DSY). Ca(2+) is bound at residue aspartate 999. Residues 1147–1255 (VSQNGTSHES…TPDRQAELPN (109 aa)) are disordered. The segment covering 1156 to 1203 (STAEEKPDSTPSKPEHQNEASHPAHQDPAPEARPDSTKPDAKVADAEN) has biased composition (basic and acidic residues). The span at 1212–1225 (SQAEQPAQEAQASS) shows a compositional bias: low complexity. Over residues 1228-1239 (EAVRKESVENSS) the composition is skewed to basic and acidic residues. Residues 1253-1257 (LPNTG) carry the LPXTG sorting signal motif. Threonine 1256 carries the pentaglycyl murein peptidoglycan amidated threonine modification. Positions 1257-1287 (GIKNENKLLFAGISLLALLGLGFLLKNKKEN) are cleaved as a propeptide — removed by sortase.

Belongs to the glycosyl hydrolase 13 family.

The protein resides in the secreted. The protein localises to the cell wall. It is found in the cell surface. It catalyses the reaction Hydrolysis of (1-&gt;6)-alpha-D-glucosidic linkages in pullulan, amylopectin and glycogen, and in the alpha- and beta-limit dextrins of amylopectin and glycogen.. Its activity is regulated as follows. Inhibited by 4-O-alpha-D-glucopyranosylmoranoline (G1M). In terms of biological role, virulence factor. Involved in the degradation of glycogen of the mammalian host cells. Hydrolyzes the alpha-1,6-branchpoints of glycogen. Hydrolyzes pullulan. Does not hydrolyze dextran. Binds to mouse lung alveolar type II cells that are rich in glycogen stores. Is an alpha-glucan-specific carbohydrate-binding protein, which binds to amylose (pure alpha-(1,4)-linked glucose), amylopectin (alpha-(1,4)-linked glucose with alpha-(1,6) branch points), pullulan (linear polymer of mixed alpha-(1,4)- and alpha-(1,6)-linked glucose) and glycogen (similar to amylopectin with more frequent alpha-(1,6) branch points) in vitro. Does not bind to dextran (a linear polymer of alpha-(1,6)-linked glucose). The polypeptide is Pullulanase A (Streptococcus pneumoniae).